A 1235-amino-acid chain; its full sequence is DNA polymerase catalytic subunit (1235 aa).

2 disordered regions span residues 640–693 (QGRF…AGRH) and 1098–1134 (AAAP…ASKP). Over residues 650 to 661 (APKRPAAAREDE) the composition is skewed to basic and acidic residues. The segment covering 662 to 675 (ERPEEEGEDEDERE) has biased composition (acidic residues). Residues 676 to 691 (EGGGEREPEGARETAG) are compositionally biased toward basic and acidic residues.

This sequence belongs to the DNA polymerase type-B family. In terms of assembly, forms a complex with the ssDNA-binding protein UL29, the DNA polymerase processivity factor, and the alkaline exonuclease. Interacts with the putative helicase-primase complex subunit UL8; this interaction may coordinate leading and lagging strand DNA synthesis at the replication fork.

The protein localises to the host nucleus. The enzyme catalyses DNA(n) + a 2'-deoxyribonucleoside 5'-triphosphate = DNA(n+1) + diphosphate. It catalyses the reaction Endonucleolytic cleavage to 5'-phosphomonoester.. Replicates viral genomic DNA. The replication complex is composed of six viral proteins: the DNA polymerase, processivity factor, primase, primase-associated factor, helicase, and ssDNA-binding protein. Additionally, the polymerase contains an intrinsic ribonuclease H (RNase H) activity that specifically degrades RNA/DNA heteroduplexes or duplex DNA substrates in the 5' to 3' direction. Therefore, it can catalyze the excision of the RNA primers that initiate the synthesis of Okazaki fragments at a replication fork during viral DNA replication. The sequence is that of DNA polymerase catalytic subunit from Human herpesvirus 1 (strain KOS) (HHV-1).